Reading from the N-terminus, the 226-residue chain is 7-cyano-7-deazaguanine synthase (226 aa).

7 to 17 (LSGGMDSLVTT) lines the ATP pocket. Positions 187, 195, 198, and 201 each coordinate Zn(2+).

This sequence belongs to the QueC family. Requires Zn(2+) as cofactor.

It catalyses the reaction 7-carboxy-7-deazaguanine + NH4(+) + ATP = 7-cyano-7-deazaguanine + ADP + phosphate + H2O + H(+). It participates in purine metabolism; 7-cyano-7-deazaguanine biosynthesis. Catalyzes the ATP-dependent conversion of 7-carboxy-7-deazaguanine (CDG) to 7-cyano-7-deazaguanine (preQ(0)). The polypeptide is 7-cyano-7-deazaguanine synthase (Chloroherpeton thalassium (strain ATCC 35110 / GB-78)).